The following is a 255-amino-acid chain: 3-dehydroquinate dehydratase (255 aa).

3-dehydroquinate-binding positions include 47–49 (EWR) and Arg-83. His-145 functions as the Proton donor/acceptor in the catalytic mechanism. Lys-172 (schiff-base intermediate with substrate) is an active-site residue. 3-dehydroquinate is bound by residues Arg-215, Ser-234, and Gln-238.

This sequence belongs to the type-I 3-dehydroquinase family. In terms of assembly, homodimer.

The enzyme catalyses 3-dehydroquinate = 3-dehydroshikimate + H2O. It functions in the pathway metabolic intermediate biosynthesis; chorismate biosynthesis; chorismate from D-erythrose 4-phosphate and phosphoenolpyruvate: step 3/7. In terms of biological role, involved in the third step of the chorismate pathway, which leads to the biosynthesis of aromatic amino acids. Catalyzes the cis-dehydration of 3-dehydroquinate (DHQ) and introduces the first double bond of the aromatic ring to yield 3-dehydroshikimate. The chain is 3-dehydroquinate dehydratase from Clostridium kluyveri (strain NBRC 12016).